Consider the following 23-residue polypeptide: Magainin-BM2 (23 aa).

In terms of tissue distribution, expressed by the skin glands.

It is found in the secreted. Antimicrobial peptide. This is Magainin-BM2 from Xenopus boumbaensis (Mawa clawed frog).